We begin with the raw amino-acid sequence, 248 residues long: Phosphomannomutase (248 aa).

Asp-14 acts as the Nucleophile in catalysis. The Mg(2+) site is built by Asp-14 and Asp-16. Catalysis depends on Asp-16, which acts as the Proton donor/acceptor. Alpha-D-mannose 1-phosphate-binding residues include Arg-23, Arg-125, Arg-136, Arg-143, Ser-181, and Asp-183. Residues Asp-209, Phe-221, and Thr-226 each contribute to the Mg(2+) site.

It belongs to the eukaryotic PMM family. In terms of assembly, homodimer. The cofactor is Mg(2+).

Its subcellular location is the cytoplasm. The enzyme catalyses alpha-D-mannose 1-phosphate = D-mannose 6-phosphate. It participates in nucleotide-sugar biosynthesis; GDP-alpha-D-mannose biosynthesis; alpha-D-mannose 1-phosphate from D-fructose 6-phosphate: step 2/2. In terms of biological role, catalyzes the interconversion of mannose-6-phosphate to mannose-1-phosphate, the precursor for the synthesis of GDP-mannose. GDP-mannose is an essential sugar nucleotide for the synthesis of D-mannose-containing cell wall polysaccharides (galactomannans and glucomannans), glycolipids, glycoproteins and the antioxidant L-ascorbate. The chain is Phosphomannomutase from Oryza sativa subsp. indica (Rice).